The chain runs to 458 residues: Repulsive guidance molecule A (458 aa).

The N-terminal stretch at 1–53 is a signal peptide; sequence MGGPGPRRAGTSRERLVVTGRAGWMGMGRGAGRSALGFWPTLAFLLCSFPAAT. A propeptide spans 54–176 (removed in mature form); the sequence is SPCKILKCNS…NYTHCGLFGD (123 aa). Residues 121-133 show a composition bias toward polar residues; sequence HNCSKDGPTSQPR. The interval 121–149 is disordered; it reads HNCSKDGPTSQPRLHTLPPAGDSQERSDS. Asparagine 122 and asparagine 167 each carry an N-linked (GlcNAc...) asparagine glycan. 2 disulfide bridges follow: cysteine 153-cysteine 234 and cysteine 171-cysteine 323. N-linked (GlcNAc...) asparagine glycosylation is present at asparagine 397. Alanine 433 is lipidated: GPI-anchor amidated alanine. Positions 434 to 458 are cleaved as a propeptide — removed in mature form; that stretch reads AGLPLAPQPLLGALILLLALFPVFC.

Belongs to the repulsive guidance molecule (RGM) family. Interacts with NEO1, BMP2 and BMP4. Post-translationally, autocatalytically cleaved at low pH; the two chains remain linked via two disulfide bonds.

The protein resides in the cell membrane. Functionally, member of the repulsive guidance molecule (RGM) family that performs several functions in the developing and adult nervous system. Regulates cephalic neural tube closure, inhibits neurite outgrowth and cortical neuron branching, and the formation of mature synapses. Binding to its receptor NEO1/neogenin induces activation of RHOA-ROCK1/Rho-kinase signaling pathway through UNC5B-ARHGEF12/LARG-PTK2/FAK1 cascade, leading to collapse of the neuronal growth cone and neurite outgrowth inhibition. Furthermore, RGMA binding to NEO1/neogenin leads to HRAS inactivation by influencing HRAS-PTK2/FAK1-AKT1 pathway. It also functions as a bone morphogenetic protein (BMP) coreceptor that may signal through SMAD1, SMAD5, and SMAD8. The protein is Repulsive guidance molecule A (RGMA) of Macaca fascicularis (Crab-eating macaque).